The chain runs to 237 residues: Oil body-associated protein 2C (237 aa).

It belongs to the OBAP family.

In Arabidopsis thaliana (Mouse-ear cress), this protein is Oil body-associated protein 2C.